A 196-amino-acid chain; its full sequence is Imidazole glycerol phosphate synthase subunit HisH (196 aa).

The 195-residue stretch at 2 to 196 folds into the Glutamine amidotransferase type-1 domain; sequence KVAVIKYNAG…ERIIKNFLEL (195 aa). The active-site Nucleophile is Cys77. Active-site residues include His178 and Glu180.

As to quaternary structure, heterodimer of HisH and HisF.

It is found in the cytoplasm. It carries out the reaction 5-[(5-phospho-1-deoxy-D-ribulos-1-ylimino)methylamino]-1-(5-phospho-beta-D-ribosyl)imidazole-4-carboxamide + L-glutamine = D-erythro-1-(imidazol-4-yl)glycerol 3-phosphate + 5-amino-1-(5-phospho-beta-D-ribosyl)imidazole-4-carboxamide + L-glutamate + H(+). It catalyses the reaction L-glutamine + H2O = L-glutamate + NH4(+). Its pathway is amino-acid biosynthesis; L-histidine biosynthesis; L-histidine from 5-phospho-alpha-D-ribose 1-diphosphate: step 5/9. In terms of biological role, IGPS catalyzes the conversion of PRFAR and glutamine to IGP, AICAR and glutamate. The HisH subunit catalyzes the hydrolysis of glutamine to glutamate and ammonia as part of the synthesis of IGP and AICAR. The resulting ammonia molecule is channeled to the active site of HisF. In Bacteroides fragilis (strain YCH46), this protein is Imidazole glycerol phosphate synthase subunit HisH.